A 596-amino-acid polypeptide reads, in one-letter code: Inactive metallocarboxypeptidase ECM14 (596 aa).

The signal sequence occupies residues 1 to 22 (MHFSVRLSLFLTLASSLPLVSA). A propeptide spanning residues 23–184 (VPQHEDQAYT…QTIYESYPKA (162 aa)) is cleaved from the precursor. A disordered region spans residues 182 to 211 (PKAGSASPSQQGPTTRRFSPSASTSKSKPH). The segment covering 187–207 (ASPSQQGPTTRRFSPSASTSK) has biased composition (polar residues). A Peptidase M14 domain is found at 220-546 (DYQPLSVLLP…RAMVAMGKFL (327 aa)). Residues His285 and Glu288 each coordinate Zn(2+). Substrate contacts are provided by residues 285-288 (HARE), Arg343, and 360-361 (DH). An intrachain disulfide couples Cys354 to Cys377. An N-linked (GlcNAc...) asparagine glycan is attached at Asn370. His417 contacts Zn(2+). Residue 418–419 (SY) participates in substrate binding. The disordered stretch occupies residues 557-596 (DGLRASEEPQDYDNDLEDGEDDKDEQGSTVFRAQADDLQS). Acidic residues predominate over residues 564 to 580 (EPQDYDNDLEDGEDDKD). Positions 583–596 (GSTVFRAQADDLQS) are enriched in polar residues.

This sequence belongs to the peptidase M14 family. Requires Zn(2+) as cofactor.

It localises to the vacuole. The protein localises to the secreted. Its function is as follows. Inactive carboxypeptidase that may play a role in cell wall organization and biogenesis. This is Inactive metallocarboxypeptidase ECM14 (ECM14) from Arthroderma benhamiae (strain ATCC MYA-4681 / CBS 112371) (Trichophyton mentagrophytes).